The following is a 573-amino-acid chain: PCNA-interacting partner (573 aa).

The tract at residues 492–532 (TGGQVKNKPCKNVANKRSKRKQVDIQSETTNAQENEPPQKK) is disordered. Polar residues predominate over residues 515-527 (DIQSETTNAQENE).

This sequence belongs to the PARI family.

Its subcellular location is the cytoplasm. The protein localises to the nucleus. Functionally, required to suppress inappropriate homologous recombination, thereby playing a central role DNA repair and in the maintenance of genomic stability. In Xenopus tropicalis (Western clawed frog), this protein is PCNA-interacting partner (parpbp).